A 76-amino-acid chain; its full sequence is DNA-directed RNA polymerase subunit Rpo5 (76 aa).

It belongs to the archaeal Rpo5/eukaryotic RPB5 RNA polymerase subunit family. In terms of assembly, part of the RNA polymerase complex.

Its subcellular location is the cytoplasm. The enzyme catalyses RNA(n) + a ribonucleoside 5'-triphosphate = RNA(n+1) + diphosphate. DNA-dependent RNA polymerase (RNAP) catalyzes the transcription of DNA into RNA using the four ribonucleoside triphosphates as substrates. This is DNA-directed RNA polymerase subunit Rpo5 from Archaeoglobus fulgidus (strain ATCC 49558 / DSM 4304 / JCM 9628 / NBRC 100126 / VC-16).